A 236-amino-acid polypeptide reads, in one-letter code: Small ribosomal subunit protein uS2c (236 aa).

Belongs to the universal ribosomal protein uS2 family.

The protein localises to the plastid. The chain is Small ribosomal subunit protein uS2c (rps2) from Cuscuta gronovii (Common dodder).